The following is a 556-amino-acid chain: Phosphomethylpyrimidine synthase (556 aa).

Substrate is bound by residues Asn191, Met220, Tyr249, His285, 305–307 (SRG), 346–349 (DALR), and Glu385. Residue His389 participates in Zn(2+) binding. Tyr412 is a binding site for substrate. His453 is a Zn(2+) binding site. 3 residues coordinate [4Fe-4S] cluster: Cys535, Cys538, and Cys543.

The protein belongs to the ThiC family. It depends on [4Fe-4S] cluster as a cofactor.

It catalyses the reaction 5-amino-1-(5-phospho-beta-D-ribosyl)imidazole + S-adenosyl-L-methionine = 4-amino-2-methyl-5-(phosphooxymethyl)pyrimidine + CO + 5'-deoxyadenosine + formate + L-methionine + 3 H(+). The protein operates within cofactor biosynthesis; thiamine diphosphate biosynthesis. Functionally, catalyzes the synthesis of the hydroxymethylpyrimidine phosphate (HMP-P) moiety of thiamine from aminoimidazole ribotide (AIR) in a radical S-adenosyl-L-methionine (SAM)-dependent reaction. The protein is Phosphomethylpyrimidine synthase of Chlorobaculum tepidum (strain ATCC 49652 / DSM 12025 / NBRC 103806 / TLS) (Chlorobium tepidum).